Here is a 256-residue protein sequence, read N- to C-terminus: Hemin import ATP-binding protein HmuV (256 aa).

Residues 2–239 enclose the ABC transporter domain; that stretch reads IHAFAVSVIR…ANVREVYQVD (238 aa). 34 to 41 is a binding site for ATP; it reads GPNGAGKS.

Belongs to the ABC transporter superfamily. Heme (hemin) importer (TC 3.A.1.14.5) family. As to quaternary structure, the complex is composed of two ATP-binding proteins (HmuV), two transmembrane proteins (HmuU) and a solute-binding protein (HmuT).

It localises to the cell inner membrane. Part of the ABC transporter complex HmuTUV involved in hemin import. Responsible for energy coupling to the transport system. This is Hemin import ATP-binding protein HmuV from Hahella chejuensis (strain KCTC 2396).